We begin with the raw amino-acid sequence, 163 residues long: MEKRILGLDPGLATLGFGVITCTQIANKVPETTVNMLDFGVIKTSADVEMGLRLCTLFDDLHTVMEEFQPDLVAIEKLFFYRMSSTILVAQARGVLILVLGQRRLPYVEFTPAQIKQALTGYGNADKLDVQEAVARELDLDEIPKPDDAADALAVALTASYQL.

Residues Asp9, Glu76, and Asp148 contribute to the active site. Positions 9, 76, and 148 each coordinate Mg(2+).

This sequence belongs to the RuvC family. As to quaternary structure, homodimer which binds Holliday junction (HJ) DNA. The HJ becomes 2-fold symmetrical on binding to RuvC with unstacked arms; it has a different conformation from HJ DNA in complex with RuvA. In the full resolvosome a probable DNA-RuvA(4)-RuvB(12)-RuvC(2) complex forms which resolves the HJ. Mg(2+) serves as cofactor.

It localises to the cytoplasm. It catalyses the reaction Endonucleolytic cleavage at a junction such as a reciprocal single-stranded crossover between two homologous DNA duplexes (Holliday junction).. Its function is as follows. The RuvA-RuvB-RuvC complex processes Holliday junction (HJ) DNA during genetic recombination and DNA repair. Endonuclease that resolves HJ intermediates. Cleaves cruciform DNA by making single-stranded nicks across the HJ at symmetrical positions within the homologous arms, yielding a 5'-phosphate and a 3'-hydroxyl group; requires a central core of homology in the junction. The consensus cleavage sequence is 5'-(A/T)TT(C/G)-3'. Cleavage occurs on the 3'-side of the TT dinucleotide at the point of strand exchange. HJ branch migration catalyzed by RuvA-RuvB allows RuvC to scan DNA until it finds its consensus sequence, where it cleaves and resolves the cruciform DNA. This is Crossover junction endodeoxyribonuclease RuvC from Nostoc punctiforme (strain ATCC 29133 / PCC 73102).